The sequence spans 515 residues: 2-isopropylmalate synthase (515 aa).

The Pyruvate carboxyltransferase domain maps to 5–268 (LIIFDTTLRD…DLGIDTTQIV (264 aa)). Residues D14, H202, H204, and N239 each coordinate Mn(2+). Residues 396 to 515 (KFVSLAQRSE…NADKLNPQRA (120 aa)) form a regulatory domain region.

This sequence belongs to the alpha-IPM synthase/homocitrate synthase family. LeuA type 1 subfamily. Homodimer. Requires Mn(2+) as cofactor.

The protein localises to the cytoplasm. The enzyme catalyses 3-methyl-2-oxobutanoate + acetyl-CoA + H2O = (2S)-2-isopropylmalate + CoA + H(+). The protein operates within amino-acid biosynthesis; L-leucine biosynthesis; L-leucine from 3-methyl-2-oxobutanoate: step 1/4. Its function is as follows. Catalyzes the condensation of the acetyl group of acetyl-CoA with 3-methyl-2-oxobutanoate (2-ketoisovalerate) to form 3-carboxy-3-hydroxy-4-methylpentanoate (2-isopropylmalate). The chain is 2-isopropylmalate synthase from Burkholderia pseudomallei (strain 1106a).